The sequence spans 626 residues: Janus kinase and microtubule-interacting protein 1 (626 aa).

Positions 1-25 are disordered; sequence MSKKGRSKGEKPETETDSVQMANEE. Positions 1–365 are mediates association with microtubules; sequence MSKKGRSKGE…KLKSLTRENV (365 aa). Coiled-coil stretches lie at residues 13–255 and 284–413; these read ETET…EAER and ERDV…DDLS. Positions 365-626 are mediates interaction with TYK2 and GABBR1; it reads VEMKEKLSAQ…ILFEPKLKFV (262 aa). S382 is modified (phosphoserine). A compositionally biased stretch (polar residues) spans 452 to 461; that stretch reads ETLSETSYNT. The tract at residues 452-481 is disordered; the sequence is ETLSETSYNTDRTDRTPATPEEDLDETTTR. The residue at position 470 (T470) is a Phosphothreonine. Residues 490-604 are a coiled coil; sequence QLTREYQALQ…EFRVLELEVR (115 aa).

It belongs to the JAKMIP family. In terms of assembly, homodimer. Interacts with JAK1 and TYK2. Forms a complex with GABBR1 and KIF5B/kinesin-1. In terms of processing, phosphorylated. As to expression, specifically expressed in brain and testis by spermatogonia, spermatocytes, spermatozoa and Sertoli cells (at protein level).

The protein localises to the cytoplasm. The protein resides in the cytoskeleton. Its subcellular location is the membrane. Associates with microtubules and may play a role in the microtubule-dependent transport of the GABA-B receptor. May play a role in JAK1 signaling and regulate microtubule cytoskeleton rearrangements. This Rattus norvegicus (Rat) protein is Janus kinase and microtubule-interacting protein 1 (Jakmip1).